A 211-amino-acid polypeptide reads, in one-letter code: Imidazole glycerol phosphate synthase subunit HisH (211 aa).

The Glutamine amidotransferase type-1 domain occupies 3–211 (VIAVIDYDMG…VSQIKAPVLV (209 aa)). Cys81 acts as the Nucleophile in catalysis. Residues His186 and Glu188 contribute to the active site.

In terms of assembly, heterodimer of HisH and HisF.

The protein resides in the cytoplasm. It catalyses the reaction 5-[(5-phospho-1-deoxy-D-ribulos-1-ylimino)methylamino]-1-(5-phospho-beta-D-ribosyl)imidazole-4-carboxamide + L-glutamine = D-erythro-1-(imidazol-4-yl)glycerol 3-phosphate + 5-amino-1-(5-phospho-beta-D-ribosyl)imidazole-4-carboxamide + L-glutamate + H(+). The catalysed reaction is L-glutamine + H2O = L-glutamate + NH4(+). It participates in amino-acid biosynthesis; L-histidine biosynthesis; L-histidine from 5-phospho-alpha-D-ribose 1-diphosphate: step 5/9. Functionally, IGPS catalyzes the conversion of PRFAR and glutamine to IGP, AICAR and glutamate. The HisH subunit catalyzes the hydrolysis of glutamine to glutamate and ammonia as part of the synthesis of IGP and AICAR. The resulting ammonia molecule is channeled to the active site of HisF. In Cyanothece sp. (strain PCC 7425 / ATCC 29141), this protein is Imidazole glycerol phosphate synthase subunit HisH.